The primary structure comprises 447 residues: tRNA-2-methylthio-N(6)-dimethylallyladenosine synthase (447 aa).

The MTTase N-terminal domain occupies 1–116; the sequence is MYIRTFGCQM…LPDLIKRRRA (116 aa). 6 residues coordinate [4Fe-4S] cluster: C8, C45, C79, C153, C157, and C160. The Radical SAM core domain occupies 139–372; that stretch reads RVDGATAFVS…QALINQQAAA (234 aa). One can recognise a TRAM domain in the interval 375–438; it reads QGMIGTRQRV…TNSLRGRVAG (64 aa).

Belongs to the methylthiotransferase family. MiaB subfamily. In terms of assembly, monomer. It depends on [4Fe-4S] cluster as a cofactor.

Its subcellular location is the cytoplasm. The catalysed reaction is N(6)-dimethylallyladenosine(37) in tRNA + (sulfur carrier)-SH + AH2 + 2 S-adenosyl-L-methionine = 2-methylsulfanyl-N(6)-dimethylallyladenosine(37) in tRNA + (sulfur carrier)-H + 5'-deoxyadenosine + L-methionine + A + S-adenosyl-L-homocysteine + 2 H(+). Functionally, catalyzes the methylthiolation of N6-(dimethylallyl)adenosine (i(6)A), leading to the formation of 2-methylthio-N6-(dimethylallyl)adenosine (ms(2)i(6)A) at position 37 in tRNAs that read codons beginning with uridine. The sequence is that of tRNA-2-methylthio-N(6)-dimethylallyladenosine synthase from Bordetella pertussis (strain Tohama I / ATCC BAA-589 / NCTC 13251).